The chain runs to 418 residues: UDP-N-acetylglucosamine 1-carboxyvinyltransferase (418 aa).

22 to 23 is a phosphoenolpyruvate binding site; the sequence is KN. R92 lines the UDP-N-acetyl-alpha-D-glucosamine pocket. Residue C116 is the Proton donor of the active site. A 2-(S-cysteinyl)pyruvic acid O-phosphothioketal modification is found at C116. UDP-N-acetyl-alpha-D-glucosamine contacts are provided by residues 121–125, D306, and I328; that span reads RPVDQ.

It belongs to the EPSP synthase family. MurA subfamily.

The protein resides in the cytoplasm. It carries out the reaction phosphoenolpyruvate + UDP-N-acetyl-alpha-D-glucosamine = UDP-N-acetyl-3-O-(1-carboxyvinyl)-alpha-D-glucosamine + phosphate. It functions in the pathway cell wall biogenesis; peptidoglycan biosynthesis. Cell wall formation. Adds enolpyruvyl to UDP-N-acetylglucosamine. The polypeptide is UDP-N-acetylglucosamine 1-carboxyvinyltransferase (Acinetobacter baylyi (strain ATCC 33305 / BD413 / ADP1)).